A 677-amino-acid chain; its full sequence is MSLAVKDLSTASSSSSKAIPVKIIPLQYPDSTSSDPHCHSIPFNDFFSRWTAKIKRMTFFDWIDAIFPCFLWIRTYRWHQYFKLDLMAGITVGIMLVPQAMSYARLAGLQPIYGLYSSFVPVFVYAVFGSSRQLAVGPVALVSLLVSNALSGIVDPSEELYTELAILLALMVGIFESIMGFLRLGWLIRFISHSVISGFTTASAVVIGLSQLKYFLGYSVSRSSKIMPVIDSIIAGADQFKWPPFLLGCTILVILLVMKHVGKAKKELRFIRAAGPLTGLALGTIIAKVFHPPSITLVGDIPQGLPKFSFPKSFDHAKLLLPTSALITGVAILESVGIAKALAAKNRYELDSNSELFGLGVANIFGSLFSAYPTTGSFSRSAVNSESEAKTGLSGLVTGIIIGCSLLFLTPMFKFIPQCALAAIVISAVSGLVDYEGAIFLWRVDKRDFTLWTITSTTTLFFGIEIGVLIGVGFSLAFVIHESANPHIAVLGRLPGTTVYRNMKQYPEAYTYNGIVIVRIDAPIYFANISYIKDRLREYEVAIDKHTSKGPDMERIYFVILEMSPVTYIDSSAVEALKDLYEEYKTRGIQLAISNPNKEVLLTLARAGIVELIGKEWFFVRVHDAVQVCVHYVNRPTDVEESSKPSLWRRSGLKNSSTYTEVESNIVLEEPLLSREK.

At 1–83 (MSLAVKDLST…RTYRWHQYFK (83 aa)) the chain is on the cytoplasmic side. Residues 84 to 104 (LDLMAGITVGIMLVPQAMSYA) traverse the membrane as a helical segment. At 105–108 (RLAG) the chain is on the extracellular side. The helical transmembrane segment at 109-129 (LQPIYGLYSSFVPVFVYAVFG) threads the bilayer. Topologically, residues 130–133 (SSRQ) are cytoplasmic. Residues 134–154 (LAVGPVALVSLLVSNALSGIV) traverse the membrane as a helical segment. The Extracellular segment spans residues 155–161 (DPSEELY). A helical membrane pass occupies residues 162–182 (TELAILLALMVGIFESIMGFL). The Cytoplasmic segment spans residues 183–189 (RLGWLIR). The chain crosses the membrane as a helical span at residues 190 to 210 (FISHSVISGFTTASAVVIGLS). Residues 211-241 (QLKYFLGYSVSRSSKIMPVIDSIIAGADQFK) are Extracellular-facing. The chain crosses the membrane as a helical span at residues 242–262 (WPPFLLGCTILVILLVMKHVG). Topologically, residues 263-269 (KAKKELR) are cytoplasmic. The chain crosses the membrane as a helical span at residues 270 to 290 (FIRAAGPLTGLALGTIIAKVF). Residues 291 to 318 (HPPSITLVGDIPQGLPKFSFPKSFDHAK) lie on the Extracellular side of the membrane. Residues 319 to 339 (LLLPTSALITGVAILESVGIA) traverse the membrane as a helical segment. Topologically, residues 340–355 (KALAAKNRYELDSNSE) are cytoplasmic. A helical membrane pass occupies residues 356–376 (LFGLGVANIFGSLFSAYPTTG). At 377–392 (SFSRSAVNSESEAKTG) the chain is on the extracellular side. The helical transmembrane segment at 393–413 (LSGLVTGIIIGCSLLFLTPMF) threads the bilayer. The Cytoplasmic segment spans residues 414 to 420 (KFIPQCA). The helical transmembrane segment at 421-441 (LAAIVISAVSGLVDYEGAIFL) threads the bilayer. Residues 442 to 459 (WRVDKRDFTLWTITSTTT) lie on the Extracellular side of the membrane. Residues 460 to 480 (LFFGIEIGVLIGVGFSLAFVI) traverse the membrane as a helical segment. The Cytoplasmic portion of the chain corresponds to 481–677 (HESANPHIAV…LEEPLLSREK (197 aa)). One can recognise an STAS domain in the interval 505 to 629 (QYPEAYTYNG…VRVHDAVQVC (125 aa)).

Belongs to the SLC26A/SulP transporter (TC 2.A.53) family.

Its subcellular location is the membrane. H(+)/sulfate cotransporter that may play a role in the regulation of sulfate assimilation. The chain is Probable sulfate transporter 4.2 (SULTR4;2) from Arabidopsis thaliana (Mouse-ear cress).